We begin with the raw amino-acid sequence, 532 residues long: Phosphoenolpyruvate carboxykinase (ATP) (532 aa).

Residues R60, Y195, and K201 each contribute to the substrate site. ATP-binding positions include K201, H221, and 237 to 245; that span reads GLSGTGKTT. Residues K201 and H221 each coordinate Mn(2+). D258 is a Mn(2+) binding site. ATP is bound by residues E287, R323, and T448. R323 contributes to the substrate binding site.

This sequence belongs to the phosphoenolpyruvate carboxykinase (ATP) family. Requires Mn(2+) as cofactor.

The protein localises to the cytoplasm. It catalyses the reaction oxaloacetate + ATP = phosphoenolpyruvate + ADP + CO2. It participates in carbohydrate biosynthesis; gluconeogenesis. In terms of biological role, involved in the gluconeogenesis. Catalyzes the conversion of oxaloacetate (OAA) to phosphoenolpyruvate (PEP) through direct phosphoryl transfer between the nucleoside triphosphate and OAA. The polypeptide is Phosphoenolpyruvate carboxykinase (ATP) (Christiangramia forsetii (strain DSM 17595 / CGMCC 1.15422 / KT0803) (Gramella forsetii)).